Consider the following 350-residue polypeptide: sn-1 oleoyl-lipid 12-desaturase (350 aa).

Helical transmembrane passes span 41-61 and 64-84; these read AWTQALLSVVMVGLGYWSLAI and WFLLPIAWIFTGTALTGFFVI. Residues 86 to 90 carry the Histidine box-1 motif; that stretch reads HDCGH. The chain crosses the membrane as a helical span at residues 98–118; that stretch reads WVNDLVGHIFMMPLIYPFHSW. A Histidine box-2 motif is present at residues 122 to 126; the sequence is HNHHH. The next 2 membrane-spanning stretches (helical) occupy residues 196–216 and 219–239; these read VAVVVLFAAVAFPTLIATTGI and FVKFWFVPWLGYHFWMSTFTI. Positions 287–291 match the Histidine box-3 motif; it reads HHLST.

The protein belongs to the fatty acid desaturase type 2 family. It depends on Fe(2+) as a cofactor.

Its subcellular location is the membrane. The catalysed reaction is a 1-[(9Z)-octadecenoyl]-2-acyl-glycerolipid + 2 reduced [2Fe-2S]-[ferredoxin] + O2 + 2 H(+) = a 1-[(9Z,12Z)-octadecdienoyl]-2-acyl-glycerolipid + 2 oxidized [2Fe-2S]-[ferredoxin] + 2 H2O. The protein operates within lipid metabolism; polyunsaturated fatty acid biosynthesis. Desaturase involved in fatty acid biosynthesis. Introduces a double bond at carbon 12 of oleoyl groups (18:1) attached to the sn-1 position of the glycerol moiety of membrane glycerolipids. In Anabaena variabilis, this protein is sn-1 oleoyl-lipid 12-desaturase.